Consider the following 605-residue polypeptide: MTSKPTTQKSVMYRIPSERTLESLHEMIGSRMSKMSLKNTLRGISNPYERDENEGSEDMIFELFKIPNKNEASIGKLLTVLRQLGLRDDDPRLVPMMEKIKDFEKIAEEKCSEATEQKHWKLTKEQFKECIAPSIDIVSRALQTDMVIPNWVTFVDQIRTLFNECKEIREGQVATYIPQLARQSPNLWAVSLCTVDGQRASFGDVKHPFCVQSVSKAFNYAIVASDLGADVVHSYVGQEPSGRLFNEICLDSTNKPHNPMVNSGAIVITSLIKSKTNMADRFDFVLNQYRKIAGNEFIGFNNATFLSERATADRNYALSYFMKENRCFPKETESLTDALDFYFQLCSVEVTCESLAVMASTLANGGVCPITNETCVDPNPCRDVLSLMYSCGMYDASGQFSFNVGLPAKSGVSGAMIVVVPNVMGICLFSPPLDSLGNSCRGVAFCKKLVSTFNFHNYDCLVHNSNIKSDPRRRDIRERDRLIPVFHVARAGDLPTMRRLYMQGEDLNTSDHDDRTVLHIAATEGYETMIKFLVNVAKVDVDKKDRWGRTPLDEAKFFKHDHVSRFLEKAMKRPEQHRKDSVSSLDTDDEIDDDGFPEKPSFTID.

7 residues coordinate substrate: Ser213, Asn262, Glu308, Asn315, Tyr342, Tyr394, and Val412. ANK repeat units follow at residues 480–509 (DRLIPVFHVARAGDLPTMRRLYMQGEDLNT) and 513–543 (DDRTVLHIAATEGYETMIKFLVNVAKVDVDK). Basic and acidic residues predominate over residues 569-581 (KAMKRPEQHRKDS). Positions 569-605 (KAMKRPEQHRKDSVSSLDTDDEIDDDGFPEKPSFTID) are disordered. Over residues 586 to 595 (DTDDEIDDDG) the composition is skewed to acidic residues.

Belongs to the glutaminase family.

The enzyme catalyses L-glutamine + H2O = L-glutamate + NH4(+). The sequence is that of Putative glutaminase 2 (glna-2) from Caenorhabditis elegans.